The sequence spans 644 residues: MLRSRRSRSRHGAQACAVMSAVLLLASVSLLYTRLSLFSSHSPNHLRSGSSEDTVLFPDSVLVSDSDVETTGGGGRGSTTSTEDRIDEHDDAIEDDGVSNEEDENQDAEQEQEVDLNRNKAASSSGFYFDHVNGVIRRAFNKRSIDEWDYDYTGFSIDSDSSGDKSSRAAFGSDDVPLDESIRRKIVEVTSVEDALLLKSGKKVSPLRQGWGDWFDKKGDFLRRDRMFKSNIETLNPLNNPMLQDPDSVGNTGLTRGDKVVQKWRLNQIKRNPFMAKKPLSVVSEKKEPNEFRLLSSVGEIKRGERKTLDNDEKIEREEQKNVESERKHDEVTEHMYADGTKWGYYPGIEPSLSFSDFMDSFFRKEKCSMRVFMVWNSPGWMFSVRHQRGLESLLSQHRDACVVVFSETVELDFFRNSFVKDSYKVAVAMPNLDELLQDTPTHVFASVWFDWRKTKFYPTHYSELVRLAALYKYGGVYLDSDVIVLGSLSSLRNTIGMEDQVAGESLNGAVMSFEKKSPFLLECLNEYYLTYDDKCLRCNGADLLTRVAKRFLNGKNRRMNQQELNIRPSSVFFPINSQQITNYFAYPAIEDERSQQDESFKKILNESLTFHFWNSVTSSLIPEPESLVAKFLDHSCIRCSDVL.

The interval 65–117 is disordered; it reads DSDVETTGGGGRGSTTSTEDRIDEHDDAIEDDGVSNEEDENQDAEQEQEVDLN. The segment covering 89 to 114 has biased composition (acidic residues); it reads HDDAIEDDGVSNEEDENQDAEQEQEV.

This is an uncharacterized protein from Arabidopsis thaliana (Mouse-ear cress).